Reading from the N-terminus, the 215-residue chain is ATP phosphoribosyltransferase (215 aa).

It belongs to the ATP phosphoribosyltransferase family. Short subfamily. In terms of assembly, heteromultimer composed of HisG and HisZ subunits.

It is found in the cytoplasm. It carries out the reaction 1-(5-phospho-beta-D-ribosyl)-ATP + diphosphate = 5-phospho-alpha-D-ribose 1-diphosphate + ATP. Its pathway is amino-acid biosynthesis; L-histidine biosynthesis; L-histidine from 5-phospho-alpha-D-ribose 1-diphosphate: step 1/9. Catalyzes the condensation of ATP and 5-phosphoribose 1-diphosphate to form N'-(5'-phosphoribosyl)-ATP (PR-ATP). Has a crucial role in the pathway because the rate of histidine biosynthesis seems to be controlled primarily by regulation of HisG enzymatic activity. The protein is ATP phosphoribosyltransferase of Lachnoclostridium phytofermentans (strain ATCC 700394 / DSM 18823 / ISDg) (Clostridium phytofermentans).